Here is a 413-residue protein sequence, read N- to C-terminus: Adenylosuccinate synthetase (413 aa).

Residues 11–17 and 39–41 each bind GTP; these read GDEGKGK and GHT. Asp12 functions as the Proton acceptor in the catalytic mechanism. The Mg(2+) site is built by Asp12 and Gly39. Residues 12–15, 37–40, Thr125, Arg139, Gln217, Thr232, and Arg296 contribute to the IMP site; these read DEGK and NAGH. The active-site Proton donor is His40. 292-298 contributes to the substrate binding site; the sequence is TTTGRPR. Residues Arg298, 324–326, and 402–404 contribute to the GTP site; these read KLD and STG.

It belongs to the adenylosuccinate synthetase family. Homodimer. It depends on Mg(2+) as a cofactor.

It localises to the cytoplasm. It catalyses the reaction IMP + L-aspartate + GTP = N(6)-(1,2-dicarboxyethyl)-AMP + GDP + phosphate + 2 H(+). It functions in the pathway purine metabolism; AMP biosynthesis via de novo pathway; AMP from IMP: step 1/2. In terms of biological role, plays an important role in the de novo pathway of purine nucleotide biosynthesis. Catalyzes the first committed step in the biosynthesis of AMP from IMP. This is Adenylosuccinate synthetase from Nautilia profundicola (strain ATCC BAA-1463 / DSM 18972 / AmH).